The chain runs to 97 residues: Pyrin domain-containing protein 2 (97 aa).

The Pyrin domain occupies Met1–Met94.

As to quaternary structure, interacts with PYCARD/ASC (via pyrin domain). Interacts with NLRP2 (via pyrin domain). Predominantly expressed in peripheral blood. Weakly expressed in testis.

The protein localises to the cytoplasm. The protein resides in the nucleus. Functionally, may play a role in innate immunity by disrupting the interaction between PYCARD and NLRP3, thereby regulating the NLRP3 inflammasome. May also inhibit NF-kappa-B signaling distally by affecting the nuclear accumulation of RELA. The sequence is that of Pyrin domain-containing protein 2 from Homo sapiens (Human).